Here is a 179-residue protein sequence, read N- to C-terminus: ATP synthase subunit b (179 aa).

A helical membrane pass occupies residues 13–33 (IHIDELVFGLIAFAVIFALVY).

It belongs to the ATPase B chain family. F-type ATPases have 2 components, F(1) - the catalytic core - and F(0) - the membrane proton channel. F(1) has five subunits: alpha(3), beta(3), gamma(1), delta(1), epsilon(1). F(0) has three main subunits: a(1), b(2) and c(10-14). The alpha and beta chains form an alternating ring which encloses part of the gamma chain. F(1) is attached to F(0) by a central stalk formed by the gamma and epsilon chains, while a peripheral stalk is formed by the delta and b chains.

Its subcellular location is the cell membrane. In terms of biological role, f(1)F(0) ATP synthase produces ATP from ADP in the presence of a proton or sodium gradient. F-type ATPases consist of two structural domains, F(1) containing the extramembraneous catalytic core and F(0) containing the membrane proton channel, linked together by a central stalk and a peripheral stalk. During catalysis, ATP synthesis in the catalytic domain of F(1) is coupled via a rotary mechanism of the central stalk subunits to proton translocation. Functionally, component of the F(0) channel, it forms part of the peripheral stalk, linking F(1) to F(0). This is ATP synthase subunit b from Thermobifida fusca (strain YX).